A 601-amino-acid polypeptide reads, in one-letter code: Aspartate--tRNA(Asp/Asn) ligase (601 aa).

An L-aspartate-binding site is contributed by E187. The tract at residues 211–214 (QQFK) is aspartate. L-aspartate contacts are provided by R233 and H461. 233-235 (RDE) contributes to the ATP binding site. Position 495 (E495) interacts with ATP. R502 serves as a coordination point for L-aspartate. 547–550 (GLDR) provides a ligand contact to ATP.

The protein belongs to the class-II aminoacyl-tRNA synthetase family. Type 1 subfamily. As to quaternary structure, homodimer.

It is found in the cytoplasm. It carries out the reaction tRNA(Asx) + L-aspartate + ATP = L-aspartyl-tRNA(Asx) + AMP + diphosphate. Functionally, aspartyl-tRNA synthetase with relaxed tRNA specificity since it is able to aspartylate not only its cognate tRNA(Asp) but also tRNA(Asn). Reaction proceeds in two steps: L-aspartate is first activated by ATP to form Asp-AMP and then transferred to the acceptor end of tRNA(Asp/Asn). This chain is Aspartate--tRNA(Asp/Asn) ligase, found in Pelodictyon phaeoclathratiforme (strain DSM 5477 / BU-1).